A 414-amino-acid chain; its full sequence is Dihydroorotase (414 aa).

2 residues coordinate Zn(2+): His57 and His59. Residues 59–61 (HLR) and Asn91 contribute to the substrate site. Residues Lys135, His164, His204, and Asp272 each coordinate Zn(2+). N6-carboxylysine is present on Lys135. The active site involves Asp272. Residues His276 and 286-287 (AG) contribute to the substrate site.

It belongs to the metallo-dependent hydrolases superfamily. DHOase family. Class I DHOase subfamily. Zn(2+) serves as cofactor.

It carries out the reaction (S)-dihydroorotate + H2O = N-carbamoyl-L-aspartate + H(+). It functions in the pathway pyrimidine metabolism; UMP biosynthesis via de novo pathway; (S)-dihydroorotate from bicarbonate: step 3/3. Catalyzes the reversible cyclization of carbamoyl aspartate to dihydroorotate. The chain is Dihydroorotase from Pyrococcus furiosus (strain ATCC 43587 / DSM 3638 / JCM 8422 / Vc1).